The sequence spans 72 residues: Delta-actitoxin-Avd2b 1 (72 aa).

The first 21 residues, 1-21, serve as a signal peptide directing secretion; it reads MMNRLLVFLMLGAAFMLVVSA. Positions 22-42 are excised as a propeptide; that stretch reads NDAYGDEPAFKDLNQGDESLG. Intrachain disulfides connect Cys-47-Cys-62, Cys-48-Cys-56, and Cys-50-Cys-67.

Belongs to the sea anemone short toxin (type III) family.

The protein resides in the secreted. Its subcellular location is the nematocyst. Its function is as follows. Voltage-gated sodium channel (Nav) inhibitor. 1 uM completely inhibits insect voltage-gated sodium channel inactivation (DmNav1 from D.melanogaster). The polypeptide is Delta-actitoxin-Avd2b 1 (Anemonia viridis (Snakelocks anemone)).